A 225-amino-acid chain; its full sequence is UPF0502 protein Ajs_3392 (225 aa).

This sequence belongs to the UPF0502 family.

The polypeptide is UPF0502 protein Ajs_3392 (Acidovorax sp. (strain JS42)).